Reading from the N-terminus, the 337-residue chain is Palmitoyltransferase ZDHHC15 (337 aa).

The Cytoplasmic portion of the chain corresponds to 1-20 (MRRGWKMALSGGLRCCRRVL). A helical transmembrane segment spans residues 21 to 41 (SWVPVLVIVLVVLWSYYAYVF). The Lumenal segment spans residues 42–56 (ELCLVTVLSPAEKVI). A helical membrane pass occupies residues 57–77 (YLILYHAIFVFFAWTYWKSIF). Residues 78–172 (TLPQQPNQKF…NNCIGFSNYK (95 aa)) lie on the Cytoplasmic side of the membrane. In terms of domain architecture, DHHC spans 129–179 (RFCDRCHLIKPDRCHHCSVCAMCVLKMDHHCPWVNNCIGFSNYKFFLQFLA). Zn(2+) contacts are provided by Cys131, Cys134, His144, Cys145, Cys148, Cys151, and His158. Cys159 (S-palmitoyl cysteine intermediate) is an active-site residue. Cys165 is a Zn(2+) binding site. Residues 173–193 (FFLQFLAYSVLYCLYIATTVF) form a helical membrane-spanning segment. At 194–210 (SYFIKYWRGELPSVRSK) the chain is on the lumenal side. Residues 211–234 (FHVLFLLFVACMFFVSLVILFGYH) traverse the membrane as a helical segment. Over 235–337 (CWLVSRNKTT…LSSLAVESET (103 aa)) the chain is Cytoplasmic. The tract at residues 293 to 337 (HSFPMRSMNESQNPLLANEEPWEDNEDESQDYPEGLSSLAVESET) is disordered. Residues 312 to 323 (EPWEDNEDESQD) show a composition bias toward acidic residues.

It belongs to the DHHC palmitoyltransferase family. Autopalmitoylated (in vitro). In brain, expressed in both excitatory and inhibitory neurons but not expressed by glial cells.

It is found in the golgi apparatus membrane. Its subcellular location is the postsynaptic density. It catalyses the reaction L-cysteinyl-[protein] + hexadecanoyl-CoA = S-hexadecanoyl-L-cysteinyl-[protein] + CoA. The enzyme catalyses L-cysteinyl-[protein] + tetradecanoyl-CoA = S-tetradecanoyl-L-cysteinyl-[protein] + CoA. It carries out the reaction L-cysteinyl-[protein] + octadecanoyl-CoA = S-octadecanoyl-L-cysteinyl-[protein] + CoA. Functionally, palmitoyltransferase that catalyzes the addition of palmitate onto various protein substrates. Has no stringent fatty acid selectivity and in addition to palmitate can also transfer onto target proteins myristate from tetradecanoyl-CoA and stearate from octadecanoyl-CoA. Palmitoylates IGF2R and SORT1, promoting their partitioning to an endosomal membrane subdomain where they can interact with the retromer cargo-selective complex. Thereby, regulates retrograde transport from endosomes to the Golgi apparatus of these lysosomal sorting receptors and plays a role in trafficking of lysosomal proteins. In the nervous system, catalyzes the palmitoylation of DLG4/PSD95 and regulates its synaptic clustering and function in synaptogenesis. Could be involved in the differentiation of dopaminergic neurons and the development of the diencephalon. Could also catalyze the palmitoylation of GAP43. Could also palmitoylate DNAJC5 and regulate its localization to the Golgi membrane. Could also palmitoylate FYN as shown in vitro. May palmitoylate CALHM3 subunit of gustatory voltage-gated ion channels and modulate channel gating and kinetics. The sequence is that of Palmitoyltransferase ZDHHC15 from Rattus norvegicus (Rat).